Reading from the N-terminus, the 355-residue chain is Serum paraoxonase/arylesterase 1 (355 aa).

Cys42 and Cys353 form a disulfide bridge. Positions 53 and 54 each coordinate Ca(2+). His115 acts as the Proton acceptor in catalysis. Residues Ile117, Asn168, Asp169, and Asn224 each contribute to the Ca(2+) site. Asn253 carries an N-linked (GlcNAc...) asparagine glycan. Ca(2+) is bound by residues Asp269 and Asn270. 2 N-linked (GlcNAc...) asparagine glycosylation sites follow: Asn270 and Asn324.

This sequence belongs to the paraoxonase family. Homodimer. Interacts with CLU. It depends on Ca(2+) as a cofactor. In terms of processing, the signal sequence is not cleaved. In terms of tissue distribution, plasma, liver, kidney, heart, brain, small intestine and lung. In the plasma, associated with HDL.

The protein resides in the secreted. Its subcellular location is the extracellular space. It carries out the reaction a phenyl acetate + H2O = a phenol + acetate + H(+). It catalyses the reaction An aryl dialkyl phosphate + H2O = dialkyl phosphate + an aryl alcohol.. The enzyme catalyses an N-acyl-L-homoserine lactone + H2O = an N-acyl-L-homoserine + H(+). Hydrolyzes the toxic metabolites of a variety of organophosphorus insecticides. Capable of hydrolyzing a broad spectrum of organophosphate substrates and lactones, and a number of aromatic carboxylic acid esters. Mediates an enzymatic protection of low density lipoproteins against oxidative modification. In Mus musculus (Mouse), this protein is Serum paraoxonase/arylesterase 1 (Pon1).